The primary structure comprises 152 residues: Large ribosomal subunit protein bL9 (152 aa).

This sequence belongs to the bacterial ribosomal protein bL9 family.

In terms of biological role, binds to the 23S rRNA. This is Large ribosomal subunit protein bL9 from Mycobacterium avium (strain 104).